We begin with the raw amino-acid sequence, 295 residues long: Sulfotransferase 1E1 (295 aa).

K48 to W53 provides a ligand contact to 3'-phosphoadenylyl sulfate. Residue K106–H108 participates in substrate binding. H108 acts as the Proton acceptor in catalysis. 3'-phosphoadenylyl sulfate is bound by residues R130, S138, and Y193. 2 positions are modified to phosphoserine; by PKA: S216 and S228. 3'-phosphoadenylyl sulfate-binding positions include T227 to M232 and R257 to G259.

Belongs to the sulfotransferase 1 family. In terms of assembly, homodimer.

It is found in the cytoplasm. The protein resides in the cytosol. The enzyme catalyses estrone + 3'-phosphoadenylyl sulfate = estrone 3-sulfate + adenosine 3',5'-bisphosphate + H(+). It catalyses the reaction (24S)-hydroxycholesterol + 3'-phosphoadenylyl sulfate = (24S)-hydroxycholesterol 3-sulfate + adenosine 3',5'-bisphosphate + H(+). It carries out the reaction 17beta-estradiol + 3'-phosphoadenylyl sulfate = 17beta-estradiol 3-sulfate + adenosine 3',5'-bisphosphate + H(+). The catalysed reaction is 3beta-hydroxyandrost-5-en-17-one + 3'-phosphoadenylyl sulfate = dehydroepiandrosterone 3-sulfate + adenosine 3',5'-bisphosphate + H(+). The enzyme catalyses 4-ethylphenol + 3'-phosphoadenylyl sulfate = 4-ethylphenyl sulfate + adenosine 3',5'-bisphosphate + H(+). With respect to regulation, inhibited by estradiol. Functionally, sulfotransferase that utilizes 3'-phospho-5'-adenylyl sulfate (PAPS) as sulfonate donor to catalyze the sulfate conjugation of estradiol and estrone. Is a key enzyme in estrogen homeostasis, the sulfation of estrogens leads to their inactivation. Also sulfates dehydroepiandrosterone (DHEA), pregnenolone, (24S)-hydroxycholesterol and xenobiotic compounds like ethinylestradiol, equalenin, diethyl stilbesterol and 1-naphthol at significantly lower efficiency. Does not sulfonate cortisol, testosterone and dopamine. May play a role in gut microbiota-host metabolic interaction. O-sulfonates 4-ethylphenol (4-EP), a dietary tyrosine-derived metabolite produced by gut bacteria. The product 4-EPS crosses the blood-brain barrier and may negatively regulate oligodendrocyte maturation and myelination, affecting the functional connectivity of different brain regions associated with the limbic system. This Bos taurus (Bovine) protein is Sulfotransferase 1E1 (SULT1E1).